The chain runs to 733 residues: Microtubule-associated protein tau (733 aa).

Basic and acidic residues predominate over residues 1-16 (MADPRQEFDTMEDHAG). The segment at 1-548 (MADPRQEFDT…PVPMPDLKNV (548 aa)) is disordered. A2 bears the N-acetylalanine mark. Residue Y18 is modified to Phosphotyrosine; by FYN. K33 is covalently cross-linked (Glycyl lysine isopeptide (Lys-Gly) (interchain with G-Cter in ubiquitin)). S35 and S50 each carry phosphoserine. Over residues 50 to 60 (SETSDAKSTPT) the composition is skewed to polar residues. A phosphothreonine mark is found at T58, T60, and T100. The residue at position 115 (R115) is an Omega-N-methylarginine. Over residues 126–137 (SDWTRQQVSSMS) the composition is skewed to polar residues. Positions 157 to 172 (RPEDIEKSHPASELLR) are enriched in basic and acidic residues. S188 carries the post-translational modification Phosphoserine. Over residues 189 to 202 (EEEVDEDLTVDESS) the composition is skewed to acidic residues. Polar residues predominate over residues 203–212 (QDSPPSQASL). 2 stretches are compositionally biased toward basic and acidic residues: residues 270-294 (EEGHEAAPEFTFHVEIKASTPKEQD) and 354-366 (ASKDRTGNDEKKA). Residues 413–427 (KHVSSVTPRNGSPGT) show a composition bias toward polar residues. T445 is subject to Phosphothreonine. Omega-N-methylarginine is present on R447. Position 451 is a phosphoserine (S451). K455 bears the N6,N6-dimethyllysine; alternate mark. K455 is subject to N6-acetyllysine; alternate. Residues T461, T467, and T468 each carry the phosphothreonine modification. S470 is subject to Phosphoserine. T473 carries the post-translational modification Phosphothreonine. Residues S477, S483, and S487 each carry the phosphoserine modification. Over residues 479–506 (EPPKSGERSGYSSPGSPGTPGSRSRTPS) the composition is skewed to low complexity. Y489 bears the Phosphotyrosine mark. Residues S490, S491, and S494 each carry the phosphoserine modification. Phosphothreonine occurs at positions 497 and 504. Position 506 is a phosphoserine (S506). T509 carries the post-translational modification Phosphothreonine. An N6-acetyllysine modification is found at K517. T523 is subject to Phosphothreonine. Phosphoserine occurs at positions 527, 529, and 531. Tau/MAP repeat units follow at residues 536–566 (QTAPVPMPDLKNVRSKIGSTENLKHQPGGGK), 567–597 (VQIINKKLDLSNVQSKCGSKDNIKHVPGGGS), 598–628 (VQIVYKPVDLSKVTSKCGSLGNIHHKPGGGQ), and 629–660 (VEVKSEKLDFKDRVQSKIGSLDNITHVPGGGN). K546 is covalently cross-linked (Glycyl lysine isopeptide (Lys-Gly) (interchain with G-Cter in ubiquitin)). Residue K551 is modified to N6-acetyllysine; alternate. K551 carries the post-translational modification N6-methyllysine; alternate. K551 participates in a covalent cross-link: Glycyl lysine isopeptide (Lys-Gly) (interchain with G-Cter in ubiquitin); alternate. Position 554 is a phosphoserine; by MARK1, BRSK1, BRSK2 and PHK (S554). Residue K559 forms a Glycyl lysine isopeptide (Lys-Gly) (interchain with G-Cter in ubiquitin) linkage. N6-acetyllysine; alternate is present on K573. Residue K573 forms a Glycyl lysine isopeptide (Lys-Gly) (interchain with G-Cter in ubiquitin); alternate linkage. A phosphoserine mark is found at S577 and S581. Residue K582 is modified to N6-acetyllysine. C583 and C614 are joined by a disulfide. At S585 the chain carries Phosphoserine. Position 590 is an N6-acetyllysine; alternate (K590). Residue K590 forms a Glycyl lysine isopeptide (Lys-Gly) (interchain with G-Cter in ubiquitin); alternate linkage. At S597 the chain carries Phosphoserine. Position 603 is an N6,N6-dimethyllysine; alternate (K603). N6-acetyllysine; alternate occurs at positions 603, 609, and 613. Residues K603, K609, and K613 each participate in a glycyl lysine isopeptide (Lys-Gly) (interchain with G-Cter in ubiquitin); alternate cross-link. S616 carries the post-translational modification Phosphoserine. N6-acetyllysine; alternate occurs at positions 623, 635, and 639. Glycyl lysine isopeptide (Lys-Gly) (interchain with G-Cter in ubiquitin); alternate cross-links involve residues K623, K635, and K639. Omega-N-methylarginine is present on R641. At S644 the chain carries Phosphoserine. K645 is covalently cross-linked (Glycyl lysine isopeptide (Lys-Gly) (interchain with G-Cter in ubiquitin)). S648 carries the post-translational modification Phosphoserine. The residue at position 661 (K661) is an N6-acetyllysine; alternate. Residue K661 forms a Glycyl lysine isopeptide (Lys-Gly) (interchain with G-Cter in ubiquitin); alternate linkage. Residue K667 forms a Glycyl lysine isopeptide (Lys-Gly) (interchain with G-Cter in ubiquitin) linkage. Residue K677 is modified to N6-acetyllysine; alternate. K677 is covalently cross-linked (Glycyl lysine isopeptide (Lys-Gly) (interchain with G-Cter in ubiquitin); alternate). Y686 carries the post-translational modification Phosphotyrosine. At S688 the chain carries Phosphoserine. The segment at 690-709 (VVSGDTSPRHLSNVSSTGSI) is disordered. The residue at position 692 (S692) is a Phosphoserine; alternate. Residue S692 is glycosylated (O-linked (GlcNAc...) serine; alternate). Residues 693 to 708 (GDTSPRHLSNVSSTGS) show a composition bias toward polar residues. T695 is subject to Phosphothreonine. S696, S701, S708, and S714 each carry phosphoserine. T719 is modified (phosphothreonine).

As to quaternary structure, interacts with MARK1, MARK2, MARK3 and MARK4. Interacts with SQSTM1 when polyubiquitinated. Interacts with PSMC2 through SQSTM1. Interacts with FKBP4. Binds to CSNK1D. Interacts with SGK1. Interacts with EPM2A; the interaction dephosphorylates MAPT at Ser-369. Interacts with PIN1. Interacts with LRRK2. Interacts with LRP1, leading to endocytosis; this interaction is reduced in the presence of LRPAP1/RAP. Polyubiquitinated. Requires functional TRAF6 and may provoke SQSTM1-dependent degradation by the proteasome. Post-translationally, phosphorylation at various serine and threonine residues in S-P or T-P motifs by proline-directed protein kinases (PDPK1, CDK1, CDK5, GSK3, MAPK) (a few sites per protein in interphase, more in mitosis), and at serine residues in K-X-G-S motifs by MAP/microtubule affinity-regulating kinase (MARK1, MARK2, MARK3, MARK4), causing detachment from microtubules, and their disassembly. Phosphorylated by PHK. Dephosphorylation at several serine and threonine residues by the serine/threonine phosphatase PPP5C. Phosphorylation at Ser-554 by BRSK1 and BRSK2 in neurons affects ability to bind microtubules and plays a role in neuron polarization. Phosphorylation at Ser-188 by SGK1 mediates microtubule depolymerization and neurite formation in hippocampal neurons. Expressed in neurons and at a lower level in the liver and kidney. Isoform PNS-tau is expressed in the peripheral nervous system while the others are expressed in the central nervous system.

The protein resides in the cytoplasm. Its subcellular location is the cytosol. It is found in the cell membrane. It localises to the cytoskeleton. The protein localises to the cell projection. The protein resides in the axon. Its subcellular location is the dendrite. It is found in the secreted. Its function is as follows. Promotes microtubule assembly and stability, and might be involved in the establishment and maintenance of neuronal polarity. The C-terminus binds axonal microtubules while the N-terminus binds neural plasma membrane components, suggesting that tau functions as a linker protein between both. Axonal polarity is predetermined by tau localization (in the neuronal cell) in the domain of the cell body defined by the centrosome. The short isoforms allow plasticity of the cytoskeleton whereas the longer isoforms may preferentially play a role in its stabilization. The polypeptide is Microtubule-associated protein tau (Mus musculus (Mouse)).